The sequence spans 223 residues: Phosphoribosylformylglycinamidine synthase subunit PurQ (223 aa).

The Glutamine amidotransferase type-1 domain occupies 3–223 (SAVVQLPGLN…FASALDVIAA (221 aa)). Cys-86 (nucleophile) is an active-site residue. Active-site residues include His-196 and Glu-198.

As to quaternary structure, part of the FGAM synthase complex composed of 1 PurL, 1 PurQ and 2 PurS subunits.

Its subcellular location is the cytoplasm. It catalyses the reaction N(2)-formyl-N(1)-(5-phospho-beta-D-ribosyl)glycinamide + L-glutamine + ATP + H2O = 2-formamido-N(1)-(5-O-phospho-beta-D-ribosyl)acetamidine + L-glutamate + ADP + phosphate + H(+). The catalysed reaction is L-glutamine + H2O = L-glutamate + NH4(+). It functions in the pathway purine metabolism; IMP biosynthesis via de novo pathway; 5-amino-1-(5-phospho-D-ribosyl)imidazole from N(2)-formyl-N(1)-(5-phospho-D-ribosyl)glycinamide: step 1/2. Part of the phosphoribosylformylglycinamidine synthase complex involved in the purines biosynthetic pathway. Catalyzes the ATP-dependent conversion of formylglycinamide ribonucleotide (FGAR) and glutamine to yield formylglycinamidine ribonucleotide (FGAM) and glutamate. The FGAM synthase complex is composed of three subunits. PurQ produces an ammonia molecule by converting glutamine to glutamate. PurL transfers the ammonia molecule to FGAR to form FGAM in an ATP-dependent manner. PurS interacts with PurQ and PurL and is thought to assist in the transfer of the ammonia molecule from PurQ to PurL. The sequence is that of Phosphoribosylformylglycinamidine synthase subunit PurQ from Rhizobium johnstonii (strain DSM 114642 / LMG 32736 / 3841) (Rhizobium leguminosarum bv. viciae).